A 126-amino-acid chain; its full sequence is Small ribosomal subunit protein uS13 (126 aa).

Positions 96–126 (PVRGQRTRTNARTRRGSRRTVAGKKKPAAKK) are disordered. The span at 100-126 (QRTRTNARTRRGSRRTVAGKKKPAAKK) shows a compositional bias: basic residues.

This sequence belongs to the universal ribosomal protein uS13 family. Part of the 30S ribosomal subunit. Forms a loose heterodimer with protein S19. Forms two bridges to the 50S subunit in the 70S ribosome.

Located at the top of the head of the 30S subunit, it contacts several helices of the 16S rRNA. In the 70S ribosome it contacts the 23S rRNA (bridge B1a) and protein L5 of the 50S subunit (bridge B1b), connecting the 2 subunits; these bridges are implicated in subunit movement. Contacts the tRNAs in the A and P-sites. The protein is Small ribosomal subunit protein uS13 of Thermosynechococcus vestitus (strain NIES-2133 / IAM M-273 / BP-1).